The primary structure comprises 403 residues: Methylthioribose-1-phosphate isomerase (403 aa).

D280 acts as the Proton donor in catalysis.

The protein belongs to the eIF-2B alpha/beta/delta subunits family. MtnA subfamily.

It is found in the cytoplasm. The protein localises to the nucleus. It catalyses the reaction 5-(methylsulfanyl)-alpha-D-ribose 1-phosphate = 5-(methylsulfanyl)-D-ribulose 1-phosphate. It functions in the pathway amino-acid biosynthesis; L-methionine biosynthesis via salvage pathway; L-methionine from S-methyl-5-thio-alpha-D-ribose 1-phosphate: step 1/6. Catalyzes the interconversion of methylthioribose-1-phosphate (MTR-1-P) into methylthioribulose-1-phosphate (MTRu-1-P). The polypeptide is Methylthioribose-1-phosphate isomerase (Eremothecium gossypii (strain ATCC 10895 / CBS 109.51 / FGSC 9923 / NRRL Y-1056) (Yeast)).